The primary structure comprises 728 residues: Catalase-peroxidase 1 (728 aa).

Positions 91–218 (WHSAGTYRIA…LAAVQMGLIY (128 aa)) form a cross-link, tryptophyl-tyrosyl-methioninium (Trp-Tyr) (with M-244). The Proton acceptor role is filled by His-92. A cross-link (tryptophyl-tyrosyl-methioninium (Tyr-Met) (with W-91)) is located at residues 218–244 (YVNPEGPDGNPDPVAAARDIRDTFARM). His-259 provides a ligand contact to heme b.

It belongs to the peroxidase family. Peroxidase/catalase subfamily. As to quaternary structure, homodimer or homotetramer. Heme b is required as a cofactor. In terms of processing, formation of the three residue Trp-Tyr-Met cross-link is important for the catalase, but not the peroxidase activity of the enzyme.

It carries out the reaction H2O2 + AH2 = A + 2 H2O. The enzyme catalyses 2 H2O2 = O2 + 2 H2O. In terms of biological role, bifunctional enzyme with both catalase and broad-spectrum peroxidase activity. The chain is Catalase-peroxidase 1 from Burkholderia ambifaria (strain ATCC BAA-244 / DSM 16087 / CCUG 44356 / LMG 19182 / AMMD) (Burkholderia cepacia (strain AMMD)).